The chain runs to 92 residues: Small ribosomal subunit protein uS19 (92 aa).

This sequence belongs to the universal ribosomal protein uS19 family.

In terms of biological role, protein S19 forms a complex with S13 that binds strongly to the 16S ribosomal RNA. In Nitrobacter hamburgensis (strain DSM 10229 / NCIMB 13809 / X14), this protein is Small ribosomal subunit protein uS19.